Reading from the N-terminus, the 111-residue chain is Class I hydrophobin SC4 (111 aa).

Positions 1-25 (MRFSLALLALPALAAAAPVPGGGKG) are cleaved as a signal peptide. 4 disulfide bridges follow: Cys30–Cys37, Cys38–Cys72, Cys86–Cys92, and Cys93–Cys106. N-linked (GlcNAc...) asparagine glycosylation is present at Asn39.

This sequence belongs to the fungal hydrophobin family. As to quaternary structure, self-assembles to form functional amyloid fibrils called rodlets. Self-assembly into fibrillar rodlets occurs spontaneously at hydrophobic:hydrophilic interfaces and the rodlets further associate laterally to form amphipathic monolayers.

The protein localises to the secreted. The protein resides in the cell wall. In terms of biological role, aerial growth, conidiation, and dispersal of filamentous fungi in the environment rely upon a capability of their secreting small amphipathic proteins called hydrophobins (HPBs) with low sequence identity. Class I can self-assemble into an outermost layer of rodlet bundles on aerial cell surfaces, conferring cellular hydrophobicity that supports fungal growth, development and dispersal; whereas Class II form highly ordered films at water-air interfaces through intermolecular interactions but contribute nothing to the rodlet structure. SC4 is a dikaryon-specific class I hydrophobin that contributes to the formation of aerial hyphae and fruiting bodies. Plays a role within fruiting bodies by preventing gas channels filling with water under wet conditions, probably serving uninterrupted gas exchange. SC4 cannot fully substitute for SC3. Involved in the unusual characteristic of mounds to adhere to and completely envelop adjacent fruiting bodies on mosaic colonies. The chain is Class I hydrophobin SC4 from Schizophyllum commune (Split gill fungus).